A 490-amino-acid polypeptide reads, in one-letter code: Mitochondrial-processing peptidase subunit beta (490 aa).

A mitochondrion-targeting transit peptide spans 1–46 (MAAAAVARAVLFSAARRRLCGFTERLLIGGAAGRSLYFGGNRLRST). His-102 serves as a coordination point for Zn(2+). Glu-105 functions as the Proton acceptor in the catalytic mechanism. Zn(2+) is bound by residues His-106 and Glu-182.

The protein belongs to the peptidase M16 family. As to quaternary structure, heterodimer of PMPCA (alpha) and PMPCB (beta) subunits, forming the mitochondrial processing protease (MPP) in which PMPCA is involved in substrate recognition and binding and PMPCB is the catalytic subunit. Zn(2+) is required as a cofactor.

It is found in the mitochondrion matrix. The enzyme catalyses Release of N-terminal transit peptides from precursor proteins imported into the mitochondrion, typically with Arg in position P2.. Its activity is regulated as follows. Binding to PMPCA is required for catalytic activity. Its function is as follows. Catalytic subunit of the essential mitochondrial processing protease (MPP), which cleaves the mitochondrial sequence off newly imported precursors proteins. Preferentially, cleaves after an arginine at position P2. Required for PINK1 turnover by coupling PINK1 mitochondrial import and cleavage, which results in subsequent PINK1 proteolysis. The chain is Mitochondrial-processing peptidase subunit beta (PMPCB) from Bos taurus (Bovine).